The chain runs to 659 residues: Centrosomal protein of 76 kDa (659 aa).

A phosphoserine mark is found at Ser75 and Ser83.

This sequence belongs to the CEP76 family. In terms of assembly, interacts with CCP110 and CEP97.

Its subcellular location is the cytoplasm. The protein resides in the cytoskeleton. It is found in the microtubule organizing center. The protein localises to the centrosome. It localises to the centriole. Its function is as follows. Centrosomal protein involved in regulation of centriole duplication. Required to limit centriole duplication to once per cell cycle by preventing centriole reduplication. This Mus musculus (Mouse) protein is Centrosomal protein of 76 kDa (Cep76).